The following is a 197-amino-acid chain: MRTNFIYHNANLIAGVDEVGRGPLVGAVVTAAVILDPQQPILGLADSKKLSEKKRILLATEIKQKALCWSLGRAEAEEIDQLNILHATMLAMQRAINALTIQPDFVLVDGNRIPSLNMPAQAIVKGDSLVAEISAASILAKVARDHEMQILDQQFPEYGFAQHKGYPTKLHIEKLAQFGATPFHRKSFAPVRKILGL.

Residues 11-197 (NLIAGVDEVG…FAPVRKILGL (187 aa)) enclose the RNase H type-2 domain. A divalent metal cation is bound by residues D17, E18, and D109.

Belongs to the RNase HII family. Mn(2+) serves as cofactor. It depends on Mg(2+) as a cofactor.

Its subcellular location is the cytoplasm. The enzyme catalyses Endonucleolytic cleavage to 5'-phosphomonoester.. Endonuclease that specifically degrades the RNA of RNA-DNA hybrids. The sequence is that of Ribonuclease HII from Haemophilus ducreyi (strain 35000HP / ATCC 700724).